The chain runs to 438 residues: Protein pop-1 (438 aa).

The disordered stretch occupies residues 1–39 (MMADEELGDEVKVFRRDEDADDDPMISGETSEQQLADDK). The interval 1-45 (MMADEELGDEVKVFRRDEDADDDPMISGETSEQQLADDKKEAVME) is sufficient for interaction with beta-catenin/sys-1. A compositionally biased stretch (basic and acidic residues) spans 9–18 (DEVKVFRRDE). Residues 88 to 130 (AALPMFMPLFMNPYAAALRSPSLMFPMGAMSPTFPMFPPSPVY) form an involved in nuclear asymmetry region. Serine 118 and serine 127 each carry phosphoserine; by LIT1. The segment at residues 192–262 (VKKPLNAFMW…THKERYPEWS (71 aa)) is a DNA-binding region (HMG box). The segment covering 250–263 (DKETHKERYPEWSA) has biased composition (basic and acidic residues). 3 disordered regions span residues 250–288 (DKET…ENND), 318–351 (TDRS…PKAN), and 378–438 (TTGA…MCTI). Over residues 270–279 (NKKKTKKRRD) the composition is skewed to basic residues. Composition is skewed to polar residues over residues 324–339 (SDIT…SGAY) and 378–395 (TTGA…SSAG). Acidic residues predominate over residues 406 to 418 (SESDVEEEEDEQI).

It belongs to the TCF/LEF family. In terms of assembly, interacts (via N-terminal region) with beta-catenin homolog sys-1. Interacts with hda-1. Interacts with bar-1. Interacts with par-5; the interaction is direct and is enhanced by lit-1-mediated pop-1 phosphorylation. The interaction also leads to the subsequent nuclear export of pop-1. Interacts (when phosphorylated on Ser-118 and Ser-127) with lit-1; the interaction is dependent on the beta-catenin-lit-1 complex. Interacts with wrm-1. Interacts with homeobox protein egl-5. Interacts with zinc finger transcription factor ref-2; the interaction is direct and facilitates transcriptional activation; transcription may be repressed by beta-catenin/sys-1. Phosphorylated on Ser-118 and Ser-127 by lit-1 in the beta-catenin-lit-1 complex. Phosphorylation promotes the interaction of pop-1 and par-5 and the subsequent translocation of pop-1 from the nucleus to the cytoplasm.

It is found in the nucleus. It localises to the cytoplasm. In terms of biological role, transcription factor. Part of the Wnt signaling asymmetry pathway. Binds to the consensus sequence, 5'-(C/T)TTTG(A/T)(A/T)(G/C)-3'. Activates or represses target gene expression, depending on upstream Wnt signals and interactions with transcription co-regulators, such as beta-catenin/sys-1 or zinc finger transcription factor ref-2. Essential for the specification of the mesodermal and endodermal cell fates in early embryos. Required in many asymmetrical cell divisions in the early embryo and during larval development. Reciprocal distribution patterns of sys-1 and pop-1 in the daughters of anterior-posterior cell divisions functions in specifying cell fate; a higher sys-1 to pop-1 ratio promotes the posterior cell fate, whereas a low sys-1 to pop-1 ratio promotes the anterior fate. Involved in modulating nuclear localization or nuclear retention of sys-1. Involved in the terminal asymmetrical division of many embryonic neuroblasts; for example in the SMDD/AIY neuron lineage. In complex with ref-2, positively modulates expression of LIM/homeobox protein ttx-3 in anterior daughter cells of the SMDD/AIY lineage. Required for asymmetrical division of somatic gonadal precursor descendants which initiate axis formation required to control organ shape. Similarly, involved in asymmetrical division of seam cells, a stem cell-like lineage. Represses expression of target genes via its interaction with hda-1 histone deacetylase. Required for specification of the M lineage-derived coelomocyte and sex myoblast fate. Regulates coelomocyte fate by positively regulating proliferation and ceh-34 and possibly eya-1 expression in M.dlpa and M.drpa precursors. This Caenorhabditis elegans protein is Protein pop-1.